Consider the following 427-residue polypeptide: Light-independent protochlorophyllide reductase subunit N (427 aa).

The [4Fe-4S] cluster site is built by Cys32, Cys57, and Cys118.

It belongs to the BchN/ChlN family. As to quaternary structure, protochlorophyllide reductase is composed of three subunits; BchL, BchN and BchB. Forms a heterotetramer of two BchB and two BchN subunits. Requires [4Fe-4S] cluster as cofactor.

It carries out the reaction chlorophyllide a + oxidized 2[4Fe-4S]-[ferredoxin] + 2 ADP + 2 phosphate = protochlorophyllide a + reduced 2[4Fe-4S]-[ferredoxin] + 2 ATP + 2 H2O. Its pathway is porphyrin-containing compound metabolism; bacteriochlorophyll biosynthesis (light-independent). Functionally, component of the dark-operative protochlorophyllide reductase (DPOR) that uses Mg-ATP and reduced ferredoxin to reduce ring D of protochlorophyllide (Pchlide) to form chlorophyllide a (Chlide). This reaction is light-independent. The NB-protein (BchN-BchB) is the catalytic component of the complex. The chain is Light-independent protochlorophyllide reductase subunit N from Rubrivivax gelatinosus (strain NBRC 100245 / IL144).